Reading from the N-terminus, the 563-residue chain is Arginine--tRNA ligase (563 aa).

A 'HIGH' region motif is present at residues 121-131 (PNIAKPFSIGH).

The protein belongs to the class-I aminoacyl-tRNA synthetase family. As to quaternary structure, monomer.

Its subcellular location is the cytoplasm. The catalysed reaction is tRNA(Arg) + L-arginine + ATP = L-arginyl-tRNA(Arg) + AMP + diphosphate. The chain is Arginine--tRNA ligase from Streptococcus pyogenes serotype M1.